Here is a 231-residue protein sequence, read N- to C-terminus: MRGFFVTGTDTEVGKTVISSGLAALLKEHNRDVGVYKPFLSGISRHHPDSDTSLLKDMSQTSLSHEDITPFAFKAPLAPYVAGKLEGKTVTMEEVLSHWGRIREKHECFIVEGAGGISVPLGEDYLVSHVIKALQLPMIIVARPHLGTINHTFLTVKYAESMGLPIAGIIINGISDSPDEDEKTNPEMIERLCGVPILGVTPKLANVTKETVLHMVKDHINLSLLMNQMGV.

Residue 12-17 (EVGKTV) coordinates ATP. T16 is a binding site for Mg(2+). The active site involves K37. Substrate is bound at residue S41. Residues D51, 112-115 (EGAG), and 202-204 (PKL) contribute to the ATP site. Mg(2+)-binding residues include D51 and E112.

This sequence belongs to the dethiobiotin synthetase family. Homodimer. It depends on Mg(2+) as a cofactor.

It localises to the cytoplasm. It carries out the reaction (7R,8S)-7,8-diammoniononanoate + CO2 + ATP = (4R,5S)-dethiobiotin + ADP + phosphate + 3 H(+). The protein operates within cofactor biosynthesis; biotin biosynthesis; biotin from 7,8-diaminononanoate: step 1/2. In terms of biological role, catalyzes a mechanistically unusual reaction, the ATP-dependent insertion of CO2 between the N7 and N8 nitrogen atoms of 7,8-diaminopelargonic acid (DAPA, also called 7,8-diammoniononanoate) to form a ureido ring. The polypeptide is ATP-dependent dethiobiotin synthetase BioD (Bacillus subtilis subsp. natto).